An 80-amino-acid polypeptide reads, in one-letter code: Cell division activator CedA (80 aa).

Belongs to the CedA family.

Its function is as follows. Activates the cell division inhibited by chromosomal DNA over-replication. In Escherichia coli (strain SMS-3-5 / SECEC), this protein is Cell division activator CedA.